A 265-amino-acid chain; its full sequence is Thiazole synthase (265 aa).

The active-site Schiff-base intermediate with DXP is the Lys103. 1-deoxy-D-xylulose 5-phosphate is bound by residues Gly164, 190-191, and 212-213; these read AG and NT.

Belongs to the ThiG family. Homotetramer. Forms heterodimers with either ThiH or ThiS.

It is found in the cytoplasm. The catalysed reaction is [ThiS sulfur-carrier protein]-C-terminal-Gly-aminoethanethioate + 2-iminoacetate + 1-deoxy-D-xylulose 5-phosphate = [ThiS sulfur-carrier protein]-C-terminal Gly-Gly + 2-[(2R,5Z)-2-carboxy-4-methylthiazol-5(2H)-ylidene]ethyl phosphate + 2 H2O + H(+). It functions in the pathway cofactor biosynthesis; thiamine diphosphate biosynthesis. Catalyzes the rearrangement of 1-deoxy-D-xylulose 5-phosphate (DXP) to produce the thiazole phosphate moiety of thiamine. Sulfur is provided by the thiocarboxylate moiety of the carrier protein ThiS. In vitro, sulfur can be provided by H(2)S. This Bordetella bronchiseptica (strain ATCC BAA-588 / NCTC 13252 / RB50) (Alcaligenes bronchisepticus) protein is Thiazole synthase.